We begin with the raw amino-acid sequence, 246 residues long: tRNA pseudouridine synthase A (246 aa).

Residue D53 is the Nucleophile of the active site. Residue Y112 coordinates substrate.

It belongs to the tRNA pseudouridine synthase TruA family. In terms of assembly, homodimer.

The enzyme catalyses uridine(38/39/40) in tRNA = pseudouridine(38/39/40) in tRNA. Its function is as follows. Formation of pseudouridine at positions 38, 39 and 40 in the anticodon stem and loop of transfer RNAs. The polypeptide is tRNA pseudouridine synthase A (Anaplasma phagocytophilum (strain HZ)).